The chain runs to 214 residues: Alkaline phosphatase-like protein (214 aa).

The next 4 membrane-spanning stretches (helical) occupy residues 3 to 23, 48 to 68, 141 to 161, and 177 to 197; these read EIII…LIMI, LGII…ALIL, FLIL…SLGA, and YSSV…LLFV.

The protein belongs to the DedA family.

It is found in the cell membrane. This is Alkaline phosphatase-like protein (apl) from Lactococcus lactis subsp. cremoris (strain MG1363).